A 291-amino-acid chain; its full sequence is 4-hydroxy-tetrahydrodipicolinate synthase (291 aa).

A pyruvate-binding site is contributed by Thr-47. Tyr-134 functions as the Proton donor/acceptor in the catalytic mechanism. Residue Lys-162 is the Schiff-base intermediate with substrate of the active site. Ile-205 is a binding site for pyruvate.

Belongs to the DapA family. As to quaternary structure, homotetramer; dimer of dimers.

It is found in the cytoplasm. The catalysed reaction is L-aspartate 4-semialdehyde + pyruvate = (2S,4S)-4-hydroxy-2,3,4,5-tetrahydrodipicolinate + H2O + H(+). It participates in amino-acid biosynthesis; L-lysine biosynthesis via DAP pathway; (S)-tetrahydrodipicolinate from L-aspartate: step 3/4. Its function is as follows. Catalyzes the condensation of (S)-aspartate-beta-semialdehyde [(S)-ASA] and pyruvate to 4-hydroxy-tetrahydrodipicolinate (HTPA). In Methanosphaerula palustris (strain ATCC BAA-1556 / DSM 19958 / E1-9c), this protein is 4-hydroxy-tetrahydrodipicolinate synthase.